The chain runs to 97 residues: MICOS complex subunit MIC12 (97 aa).

Residues 7–24 (LTSITAVSSTLAASYYFY) traverse the membrane as a helical segment.

This sequence belongs to the MICOS complex subunit Mic12 family. As to quaternary structure, component of the mitochondrial contact site and cristae organizing system (MICOS) complex.

The protein localises to the mitochondrion inner membrane. In terms of biological role, component of the MICOS complex, a large protein complex of the mitochondrial inner membrane that plays crucial roles in the maintenance of crista junctions, inner membrane architecture, and formation of contact sites to the outer membrane. The sequence is that of MICOS complex subunit MIC12 (AIM5) from Zygosaccharomyces rouxii (strain ATCC 2623 / CBS 732 / NBRC 1130 / NCYC 568 / NRRL Y-229).